The following is a 301-amino-acid chain: Aquaporin-10 (301 aa).

Residues 1-22 lie on the Cytoplasmic side of the membrane; the sequence is MVFTQAPAEIMGHLRIRSLLAR. A helical transmembrane segment spans residues 23 to 41; the sequence is QCLAEFLGVFVLMLLTQGA. At 42–55 the chain is on the extracellular side; that stretch reads VAQAVTSGETKGNF. The helical transmembrane segment at 56–75 threads the bilayer; sequence FTMFLAGSLAVTIAIYVGGN. Residues 76-77 lie on the Cytoplasmic side of the membrane; it reads VS. An intramembrane region (discontinuously helical) is located at residues 78 to 90; the sequence is GAHLNPAFSLAMC. Positions 82 to 84 match the NPA 1 motif; sequence NPA. Over 91–96 the chain is Cytoplasmic; it reads IVGRLP. A helical membrane pass occupies residues 97 to 121; the sequence is WVKLPIYILVQLLSAFCASGATYVL. Residues 122–158 are Extracellular-facing; the sequence is YHDALQNYTGGNLTVTGPKETASIFATYPAPYLSLNN. N-linked (GlcNAc...) asparagine glycosylation is found at Asn128 and Asn133. A helical transmembrane segment spans residues 159-176; that stretch reads GFLDQVLGTGMLIVGLLA. Over 177–188 the chain is Cytoplasmic; that stretch reads ILDRRNKGVPAG. Residues 189–205 form a helical membrane-spanning segment; the sequence is LEPVVVGMLILALGLSM. At 206 to 208 the chain is on the extracellular side; that stretch reads GAN. Positions 209-223 form an intramembrane region, discontinuously helical; it reads CGIPLNPARDLGPRL. Positions 214-216 match the NPA 2 motif; that stretch reads NPA. Topologically, residues 224 to 241 are extracellular; the sequence is FTYVAGWGPEVFSAGNGW. The helical transmembrane segment at 242 to 262 threads the bilayer; it reads WWVPVVAPLVGATVGTATYQL. Residues 263-301 are Cytoplasmic-facing; the sequence is LVALHHPEGPEPAQDLVSAQHKASELETPASAQMLECKL.

The protein belongs to the MIP/aquaporin (TC 1.A.8) family. In terms of assembly, homotetramer; each monomer provides an independent glycerol/water pore. Post-translationally, N-glycosylation at Asn-133 increases the stability of the protein but has no effect on its activity. In terms of tissue distribution, detected in epithelial cells on villi in the ileum, and also in stomach, jejunum, colon, rectum, white adipose tissue and placenta (at protein level). Expressed in duodenum and jejunum. Highest expression in absorptive epithelial cells at the tips of villi in the jejunum. Detected in subcutaneous adipose tissue.

It is found in the apical cell membrane. It localises to the cell membrane. Its subcellular location is the lipid droplet. It carries out the reaction glycerol(in) = glycerol(out). The catalysed reaction is H2O(in) = H2O(out). The enzyme catalyses urea(in) = urea(out). Glycerol transport is regulated by pH, with the porin being permeable to glycerol at pH 5.5 but not at pH 7.4. Water permeability, however, is not influenced by pH. In terms of biological role, aquaglyceroporins form homotetrameric transmembrane channels, with each monomer independently mediating glycerol and water transport across the plasma membrane along their osmotic gradient. Could also be permeable to urea. Among aquaglyceroporins, it exhibits a unique pH-gated glycerol transport activity, being more active at acidic pH. It most likely plays a central role in the efflux of glycerol formed during triglyceride hydrolysis in adipocytes and in glycerol uptake by enterocytes, as both processes occur and are stimulated at acidic pH. The sequence is that of Aquaporin-10 from Homo sapiens (Human).